A 235-amino-acid chain; its full sequence is Small ribosomal subunit protein uS3 (235 aa).

Residues 39–107 (IRQYVFKALP…DVSLNIVEIR (69 aa)) enclose the KH type-2 domain.

The protein belongs to the universal ribosomal protein uS3 family. In terms of assembly, part of the 30S ribosomal subunit. Forms a tight complex with proteins S10 and S14.

Functionally, binds the lower part of the 30S subunit head. Binds mRNA in the 70S ribosome, positioning it for translation. The chain is Small ribosomal subunit protein uS3 from Sphingopyxis alaskensis (strain DSM 13593 / LMG 18877 / RB2256) (Sphingomonas alaskensis).